We begin with the raw amino-acid sequence, 415 residues long: MMLGAVKMEGHEHTDWSTYYGEPECYTSVGNMNTGLGMNSMNTYMSMSGMSTTANMTANSMNMSYVNTGMSPSMTGMSPGTGAMNGMGAGMTAMSTALSPSMSPMTGQPGSMNALTSYTNMNAMSPIYGQSNINRSRDPKTYRRSYTHAKPPYSYISLITMAIQQSPSKMLTLAEIYQWIMDLFPFYRQNQQRWQNSIRHSLSFNDCFLKVPRSPDKPGKGSFWTLHPDSGNMFENGCYLRRQKRFKCEKKMSMKEPGRKGGDGGSANSSSDSCNGNESPHSNSSSGEHKRSLSDMKGSQALSPEHTAPSPVSQGQHLMSQHHSVLAHEAHLKPEHHYSFNHPFSINNLMSSEQQHHKMDLKTYEQVMHYSGYGSPMTGALSMGSMAGKAGLDSASIPDTSYYQGVYSRPIMNSS.

Residues 150 to 244 (KPPYSYISLI…ENGCYLRRQK (95 aa)) constitute a DNA-binding region (fork-head). Over residues 251–262 (KMSMKEPGRKGG) the composition is skewed to basic and acidic residues. A disordered region spans residues 251 to 324 (KMSMKEPGRK…GQHLMSQHHS (74 aa)). A compositionally biased stretch (low complexity) spans 266-277 (SANSSSDSCNGN). Residues 310–323 (SPVSQGQHLMSQHH) show a composition bias toward polar residues.

It localises to the nucleus. Its function is as follows. Transcription activator for a number of liver genes. Interacts with the cis-acting regulatory regions of these genes. The chain is Hepatocyte nuclear factor 3-beta (foxa2) from Oryzias latipes (Japanese rice fish).